The primary structure comprises 133 residues: Bacteriohemerythrin (133 aa).

H19, H56, E60, H75, H79, H115, and D120 together coordinate Fe cation.

Belongs to the hemerythrin family. As to quaternary structure, monomer.

Functionally, oxygen-binding protein. May be involved in a storage mechanism or for delivery to oxygen-requiring enzymes. The oxygen-binding site contains two iron atoms. This chain is Bacteriohemerythrin, found in Campylobacter jejuni subsp. jejuni serotype O:6 (strain 81116 / NCTC 11828).